A 474-amino-acid chain; its full sequence is MLQAHTGYDLAIIGSGAGAFAAAIAARNKGRSVVMVERGTTGGTCVNVGCVPSKALLAAAEARHGAQAASRFPGIQATEPALDFPALISGKDTLVGQLRAEKYTDLAAEYGWQIVHGTATFADGPMLEVALNDGGTATVEAAHYLIATGSAPTAPHIDGLDQVDYLTSTTAMELQQLPEHLLILGGGYVGLEQAQLFARLGSRVTLAVRSRLASREEPEISAGIENIFREEGITVHTRTQLRAVRRDGEGILATLTGPDGDQQVRASHLLIATGRRSVTNGLGLERVGVKTGERGEVVVDEYLRTDNPRIWAAGDVTCHPDFVYVAAAHGTLVADNALDGAERTLDYTALPKVTFTSPAIASVGLTEAQLTEAGIAHQTRTLSLENVPRALVNRDTRGLVKLIAERGTGKLLAAHVLAEGAGDVITAATYAITAGLTVDQLARTWHPYLTMAEALKLAAQTFTSDVAKLSCCAG.

The FAD site is built by alanine 19, glycine 39, and threonine 44. Cysteine 45 and cysteine 50 form a disulfide bridge. Residues lysine 54, alanine 119, aspartate 315, and valine 323 each contribute to the FAD site. Residues cysteine 471 and cysteine 472 each coordinate Hg(2+).

The protein belongs to the class-I pyridine nucleotide-disulfide oxidoreductase family. Homodimer. Requires FAD as cofactor.

It carries out the reaction Hg + NADP(+) + H(+) = Hg(2+) + NADPH. Its function is as follows. Resistance to Hg(2+) in bacteria appears to be governed by a specialized system which includes mercuric reductase. MerA protein is responsible for volatilizing mercury as Hg(0). The chain is Mercuric reductase (merA) from Streptomyces lividans.